A 161-amino-acid polypeptide reads, in one-letter code: Phosphopantetheine adenylyltransferase (161 aa).

S11 contacts substrate. ATP-binding positions include 11–12 and H19; that span reads SF. Residues K43, L75, and R89 each contribute to the substrate site. ATP contacts are provided by residues 90–92, E100, and 125–131; these read GLR and YSYLSSS.

The protein belongs to the bacterial CoaD family. In terms of assembly, homohexamer. It depends on Mg(2+) as a cofactor.

The protein resides in the cytoplasm. The catalysed reaction is (R)-4'-phosphopantetheine + ATP + H(+) = 3'-dephospho-CoA + diphosphate. It participates in cofactor biosynthesis; coenzyme A biosynthesis; CoA from (R)-pantothenate: step 4/5. In terms of biological role, reversibly transfers an adenylyl group from ATP to 4'-phosphopantetheine, yielding dephospho-CoA (dPCoA) and pyrophosphate. The chain is Phosphopantetheine adenylyltransferase from Geobacter sp. (strain M21).